A 335-amino-acid chain; its full sequence is Methionine import ATP-binding protein MetN 2 (335 aa).

An ABC transporter domain is found at 2-242; it reads IEFHNVHKTY…PQHSTTKRFV (241 aa). An ATP-binding site is contributed by 38-45; it reads GHSGAGKS.

This sequence belongs to the ABC transporter superfamily. Methionine importer (TC 3.A.1.24) family. The complex is composed of two ATP-binding proteins (MetN), two transmembrane proteins (MetI) and a solute-binding protein (MetQ).

The protein resides in the cell inner membrane. The enzyme catalyses L-methionine(out) + ATP + H2O = L-methionine(in) + ADP + phosphate + H(+). The catalysed reaction is D-methionine(out) + ATP + H2O = D-methionine(in) + ADP + phosphate + H(+). In terms of biological role, part of the ABC transporter complex MetNIQ involved in methionine import. Responsible for energy coupling to the transport system. The protein is Methionine import ATP-binding protein MetN 2 of Pseudomonas syringae pv. tomato (strain ATCC BAA-871 / DC3000).